A 332-amino-acid polypeptide reads, in one-letter code: Fructose-1,6-bisphosphatase class 1 (332 aa).

The Mg(2+) site is built by Glu89, Asp110, Leu112, and Asp113. Residues 113–116, Asn206, Tyr239, 257–259, and Lys269 contribute to the substrate site; these read DGSS and YLY. Glu275 is a Mg(2+) binding site.

Belongs to the FBPase class 1 family. In terms of assembly, homotetramer. Requires Mg(2+) as cofactor.

It localises to the cytoplasm. The enzyme catalyses beta-D-fructose 1,6-bisphosphate + H2O = beta-D-fructose 6-phosphate + phosphate. Its pathway is carbohydrate biosynthesis; gluconeogenesis. In Erwinia tasmaniensis (strain DSM 17950 / CFBP 7177 / CIP 109463 / NCPPB 4357 / Et1/99), this protein is Fructose-1,6-bisphosphatase class 1.